The primary structure comprises 880 residues: Valine--tRNA ligase (880 aa).

A 'HIGH' region motif is present at residues 51 to 61 (PNVTGELHLGH). The 'KMSKS' region signature appears at 529–533 (KMSKT). Lys532 provides a ligand contact to ATP. Residues 815 to 854 (MSTMVDLEAEAKRVEAEIAELETQIERLSARLSDTQFLAK) adopt a coiled-coil conformation.

It belongs to the class-I aminoacyl-tRNA synthetase family. ValS type 1 subfamily. In terms of assembly, monomer.

The protein resides in the cytoplasm. The catalysed reaction is tRNA(Val) + L-valine + ATP = L-valyl-tRNA(Val) + AMP + diphosphate. Its function is as follows. Catalyzes the attachment of valine to tRNA(Val). As ValRS can inadvertently accommodate and process structurally similar amino acids such as threonine, to avoid such errors, it has a 'posttransfer' editing activity that hydrolyzes mischarged Thr-tRNA(Val) in a tRNA-dependent manner. In Dehalococcoides mccartyi (strain ATCC BAA-2266 / KCTC 15142 / 195) (Dehalococcoides ethenogenes (strain 195)), this protein is Valine--tRNA ligase.